The chain runs to 378 residues: IDS-type sesquiterpene synthase (378 aa).

The Mg(2+) site is built by Asp120 and Asp124. Residues 120 to 124 (DDYVD) carry the DDXXD motif motif.

The protein belongs to the terpene synthase family. The cofactor is Mg(2+). In terms of tissue distribution, highly expressed in male epidermal tissue associated with the cuticle of ventral sternites.

The catalysed reaction is (2Z,6E)-farnesyl diphosphate = (Z)-alpha-bisabolene + diphosphate. The protein operates within pheromone biosynthesis. Functionally, sesquiterpene alcohol synthase that catalyzes the formation of the pheromone precursor (Z)-alpha-bisabolene from (2Z,6E)-farnesyl diphosphate. This chain is IDS-type sesquiterpene synthase, found in Nezara viridula (Southern green stink bug).